We begin with the raw amino-acid sequence, 311 residues long: MKVAVLGAAGGIGQALALLLKTQLPAGSKLSLYDIAPVIPGVAVDLSHIPTAVEVKGFAGEDPTAALEGADVVLISAGVARKPGMDRSDLFNINAGIVRNLVEKCAATCPKALIGIITNPVNTTVAIAAEVLKKAGVYDKNRLFGVTTLDVIRSETFVAEAKDLNVADVKVPVIGGHSGVTILPLLSQVEGVSFTDAEIAALTTRIQNAGTEVVEAKAGGGSATLSMGQAACRFGLSLVRGLQGEANVVECAYVDGGSEHTEFFAQPVVLGKNGIEQVLAYGEVSAFEANARDAMLDTLKADIQLGIEFVK.

NAD(+) is bound by residues 7-13 (GAAGGIG) and D34. Positions 81 and 87 each coordinate substrate. Residues N94 and 117 to 119 (ITN) each bind NAD(+). N119 and R153 together coordinate substrate. The Proton acceptor role is filled by H177. Residue M227 participates in NAD(+) binding.

The protein belongs to the LDH/MDH superfamily. MDH type 1 family. As to quaternary structure, homodimer.

It catalyses the reaction (S)-malate + NAD(+) = oxaloacetate + NADH + H(+). Its function is as follows. Catalyzes the reversible oxidation of malate to oxaloacetate. The protein is Malate dehydrogenase of Shewanella halifaxensis (strain HAW-EB4).